We begin with the raw amino-acid sequence, 101 residues long: Phosphoribosyl-AMP cyclohydrolase (101 aa).

A Mg(2+)-binding site is contributed by Asp-71. Position 72 (Cys-72) interacts with Zn(2+). Mg(2+) contacts are provided by Asp-73 and Asp-75. Positions 88 and 95 each coordinate Zn(2+).

The protein belongs to the PRA-CH family. In terms of assembly, homodimer. Mg(2+) serves as cofactor. It depends on Zn(2+) as a cofactor.

The protein resides in the cytoplasm. It carries out the reaction 1-(5-phospho-beta-D-ribosyl)-5'-AMP + H2O = 1-(5-phospho-beta-D-ribosyl)-5-[(5-phospho-beta-D-ribosylamino)methylideneamino]imidazole-4-carboxamide. It participates in amino-acid biosynthesis; L-histidine biosynthesis; L-histidine from 5-phospho-alpha-D-ribose 1-diphosphate: step 3/9. Its function is as follows. Catalyzes the hydrolysis of the adenine ring of phosphoribosyl-AMP. This Bacillus cereus (strain AH187) protein is Phosphoribosyl-AMP cyclohydrolase.